The sequence spans 174 residues: Large ribosomal subunit protein bL17 (174 aa).

It belongs to the bacterial ribosomal protein bL17 family. Part of the 50S ribosomal subunit. Contacts protein L32.

In Ruminiclostridium cellulolyticum (strain ATCC 35319 / DSM 5812 / JCM 6584 / H10) (Clostridium cellulolyticum), this protein is Large ribosomal subunit protein bL17.